A 261-amino-acid chain; its full sequence is Sepiapterin reductase (261 aa).

Residues 16 to 22 (GASRGFG), 44 to 45 (RT), and 71 to 72 (DL) each bind NADP(+). Residues 158-159 (SL) and Tyr-171 contribute to the substrate site. Residue Lys-175 participates in NADP(+) binding. Gly-200 is a binding site for substrate. 202 to 207 (LDTDMH) provides a ligand contact to NADP(+). Asp-258 provides a ligand contact to substrate.

The protein belongs to the sepiapterin reductase family. As to quaternary structure, homodimer.

It is found in the cytoplasm. The enzyme catalyses L-erythro-7,8-dihydrobiopterin + NADP(+) = L-sepiapterin + NADPH + H(+). It carries out the reaction (6R)-L-erythro-5,6,7,8-tetrahydrobiopterin + 2 NADP(+) = 6-pyruvoyl-5,6,7,8-tetrahydropterin + 2 NADPH + 2 H(+). Catalyzes the final one or two reductions in tetra-hydrobiopterin biosynthesis to form 5,6,7,8-tetrahydrobiopterin. This chain is Sepiapterin reductase (spr), found in Xenopus tropicalis (Western clawed frog).